Reading from the N-terminus, the 60-residue chain is Large ribosomal subunit protein bL32 (60 aa).

It belongs to the bacterial ribosomal protein bL32 family.

The chain is Large ribosomal subunit protein bL32 from Synechococcus sp. (strain JA-3-3Ab) (Cyanobacteria bacterium Yellowstone A-Prime).